The chain runs to 512 residues: Cytochrome P450 26B1 (512 aa).

Residue Cys-441 coordinates heme.

This sequence belongs to the cytochrome P450 family. Heme serves as cofactor.

It localises to the endoplasmic reticulum membrane. The protein resides in the microsome membrane. It carries out the reaction all-trans-retinoate + reduced [NADPH--hemoprotein reductase] + O2 = all-trans-4-hydroxyretinoate + oxidized [NADPH--hemoprotein reductase] + H2O + H(+). The catalysed reaction is all-trans-retinoate + reduced [NADPH--hemoprotein reductase] + O2 = all-trans-18-hydroxyretinoate + oxidized [NADPH--hemoprotein reductase] + H2O + H(+). A cytochrome P450 monooxygenase involved in the metabolism of retinoates (RAs), the active metabolites of vitamin A, and critical signaling molecules in animals. RAs exist as at least four different isomers: all-trans-RA (atRA), 9-cis-RA, 13-cis-RA, and 9,13-dicis-RA, where atRA is considered to be the biologically active isomer, although 9-cis-RA and 13-cis-RA also have activity. Catalyzes the hydroxylation of atRA primarily at C-4 and C-18, thereby contributing to the regulation of atRA homeostasis and signaling. Hydroxylation of atRA limits its biological activity and initiates a degradative process leading to its eventual elimination. Involved in the convertion of atRA to all-trans-4-oxo-RA. Can oxidize all-trans-13,14-dihydroretinoate (DRA) to metabolites which could include all-trans-4-oxo-DRA, all-trans-4-hydroxy-DRA, all-trans-5,8-epoxy-DRA, and all-trans-18-hydroxy-DRA. Shows preference for the following substrates: atRA &gt; 9-cis-RA &gt; 13-cis-RA. Plays a central role in germ cell development: acts by degrading RAs in the developing testis, preventing STRA8 expression, thereby leading to delay of meiosis. Required for the maintenance of the undifferentiated state of male germ cells during embryonic development in Sertoli cells, inducing arrest in G0 phase of the cell cycle and preventing meiotic entry. Plays a role in skeletal development, both at the level of patterning and in the ossification of bone and the establishment of some synovial joints. Essential for postnatal survival. In terms of biological role, also has a significant activity in oxidation of tazarotenic acid and may therefore metabolize that xenobiotic in vivo. The protein is Cytochrome P450 26B1 (Cyp26b1) of Mus musculus (Mouse).